The sequence spans 679 residues: Protein SQS1 (679 aa).

Disordered regions lie at residues 1–40 (MAKR…RNNS), 76–161 (DSMR…PEPK), 242–315 (VSEE…PGFG), and 391–419 (PEEP…QDDE). Basic residues predominate over residues 16-32 (RGRRGGRAGHRGRGGRR). Acidic residues predominate over residues 146 to 156 (GDDEPEGEYEP). Positions 406 to 419 (ENYDDSEEDEQDDE) are enriched in acidic residues. The region spanning 514-576 (GFHIENIIDE…HTRVLVQKGG (63 aa)) is the R3H domain. Residues 633–679 (QDNVGRRLLEKLGWTHGEGLGVHGNKGISEPLMARVKKNRSGLRYTE) form the G-patch domain.

Belongs to the SQS1 family.

The protein resides in the cytoplasm. It is found in the nucleus. Functionally, may be involved in splicing. The protein is Protein SQS1 (SQS1) of Eremothecium gossypii (strain ATCC 10895 / CBS 109.51 / FGSC 9923 / NRRL Y-1056) (Yeast).